Consider the following 441-residue polypeptide: Zinc finger and BTB domain-containing protein 8A (441 aa).

The BTB domain occupies 24 to 92; it reads CDCSILVEGK…VYSGKLSLTG (69 aa). 2 stretches are compositionally biased toward polar residues: residues 143–170 and 178–196; these read NGVERSSFYSGGWQEGSSSPRSHLSPEQ and KSWNKYNYHPASQKNTQQP. The tract at residues 143-251 is disordered; it reads NGVERSSFYS…QSEEQAQIDA (109 aa). Phosphoserine occurs at positions 161 and 167. Glycyl lysine isopeptide (Lys-Gly) (interchain with G-Cter in SUMO2) cross-links involve residues Lys-178, Lys-182, Lys-191, and Lys-199. Residues 198 to 208 show a composition bias toward basic and acidic residues; that stretch reads AKHEPRKESIK. A compositionally biased stretch (low complexity) spans 234 to 243; the sequence is SDSSSHVSQS. C2H2-type zinc fingers lie at residues 282 to 304 and 310 to 333; these read FKCPYCTHVVKRKADLKRHLRCH and YPCQACGKRFSRLDHLSSHFRTIH. A Glycyl lysine isopeptide (Lys-Gly) (interchain with G-Cter in SUMO2) cross-link involves residue Lys-437.

It localises to the nucleus. In terms of biological role, may be involved in transcriptional regulation. The protein is Zinc finger and BTB domain-containing protein 8A (ZBTB8A) of Homo sapiens (Human).